The sequence spans 611 residues: Autophagy-related protein 22-2 (611 aa).

A disordered region spans residues 1–24 (MRADDNPSARSLHAQFPGDDTRPT). Residues 35-55 (YGWAAEVFTVCAMGSFLPITL) form a helical membrane-spanning segment. Residue Asn78 is glycosylated (N-linked (GlcNAc...) asparagine). The next 3 membrane-spanning stretches (helical) occupy residues 116-136 (TASF…VLII), 151-171 (LLVA…SVVP), and 175-195 (IVGA…FVLL). A glycan (N-linked (GlcNAc...) asparagine) is linked at Asn221. 2 helical membrane passes run 286–306 (IGIG…VIIA) and 316–336 (LVLF…ALWL). N-linked (GlcNAc...) asparagine glycosylation occurs at Asn353. Helical transmembrane passes span 380 to 400 (ILLF…VSGT), 414 to 434 (AALG…AFSW), 449 to 469 (IIAC…GFVP), 483 to 503 (WEMF…SSYC), 521 to 541 (ALYA…VGLI), and 551 to 571 (AFVF…LVDV).

The protein belongs to the ATG22 family.

It is found in the vacuole membrane. In terms of biological role, vacuolar effluxer which mediate the efflux of amino acids resulting from autophagic degradation. The release of autophagic amino acids allows the maintenance of protein synthesis and viability during nitrogen starvation. In Aspergillus clavatus (strain ATCC 1007 / CBS 513.65 / DSM 816 / NCTC 3887 / NRRL 1 / QM 1276 / 107), this protein is Autophagy-related protein 22-2 (atg22-2).